The primary structure comprises 192 residues: Putative inactive ribonuclease 11 (192 aa).

An N-terminal signal peptide occupies residues 1–15 (MAVFLLLLALGLLLA). The interval 21–54 (RMKGTTEQFSQEEMQPAAKQTLEESANSTLSDKN) is disordered. Polar residues predominate over residues 43-54 (EESANSTLSDKN). Residues asparagine 47 and asparagine 104 are each glycosylated (N-linked (GlcNAc...) asparagine).

This sequence belongs to the pancreatic ribonuclease family.

The protein resides in the secreted. The protein is Putative inactive ribonuclease 11 (Rnase11) of Mus musculus (Mouse).